A 177-amino-acid chain; its full sequence is ATP synthase subunit delta (177 aa).

It belongs to the ATPase delta chain family. F-type ATPases have 2 components, F(1) - the catalytic core - and F(0) - the membrane proton channel. F(1) has five subunits: alpha(3), beta(3), gamma(1), delta(1), epsilon(1). CF(0) has four main subunits: a(1), b(1), b'(1) and c(10-14). The alpha and beta chains form an alternating ring which encloses part of the gamma chain. F(1) is attached to F(0) by a central stalk formed by the gamma and epsilon chains, while a peripheral stalk is formed by the delta, b and b' chains.

It is found in the cell inner membrane. Functionally, f(1)F(0) ATP synthase produces ATP from ADP in the presence of a proton or sodium gradient. F-type ATPases consist of two structural domains, F(1) containing the extramembraneous catalytic core and F(0) containing the membrane proton channel, linked together by a central stalk and a peripheral stalk. During catalysis, ATP synthesis in the catalytic domain of F(1) is coupled via a rotary mechanism of the central stalk subunits to proton translocation. Its function is as follows. This protein is part of the stalk that links CF(0) to CF(1). It either transmits conformational changes from CF(0) to CF(1) or is implicated in proton conduction. The protein is ATP synthase subunit delta of Methylibium petroleiphilum (strain ATCC BAA-1232 / LMG 22953 / PM1).